The sequence spans 88 residues: LYR motif-containing protein 2 (88 aa).

The transit peptide at 1-19 (MAASRLPPATLTLKQFVRR) directs the protein to the mitochondrion.

Belongs to the complex I LYR family.

It localises to the mitochondrion. Functionally, involved in efficient integration of the N-module into mitochondrial respiratory chain complex I. The polypeptide is LYR motif-containing protein 2 (LYRM2) (Pongo abelii (Sumatran orangutan)).